The primary structure comprises 356 residues: Cytochrome c oxidase subunit 2 (356 aa).

Residues 1-23 (MNKGLCNWRLFSLFGMMALLLAG) form the signal peptide. Residues 24–259 (CGKPFLSTLQ…QNAKKPVVTD (236 aa)) are cytochrome c oxidase subunit II. The next 2 helical transmembrane spans lie at 45-65 (LMLL…IIFV) and 93-113 (IIWT…TVLT). Residues His178, Cys219, Cys223, and His227 each coordinate Cu cation. One can recognise a Cytochrome c domain in the interval 260–356 (PVAKEGEAIF…TKYLMSLKVE (97 aa)). Heme c-binding residues include Cys273, Cys276, His277, and Met331.

It belongs to the cytochrome c oxidase subunit 2 family. Requires Cu cation as cofactor. Heme c serves as cofactor.

It is found in the cell membrane. It carries out the reaction 4 Fe(II)-[cytochrome c] + O2 + 8 H(+)(in) = 4 Fe(III)-[cytochrome c] + 2 H2O + 4 H(+)(out). Functionally, subunits I and II form the functional core of the enzyme complex. Electrons originating in cytochrome c are transferred via heme a and Cu(A) to the binuclear center formed by heme a3 and Cu(B). In Bacillus sp. (strain PS3), this protein is Cytochrome c oxidase subunit 2 (ctaC).